We begin with the raw amino-acid sequence, 157 residues long: UPF0178 protein BH1374 (157 aa).

This sequence belongs to the UPF0178 family.

In Halalkalibacterium halodurans (strain ATCC BAA-125 / DSM 18197 / FERM 7344 / JCM 9153 / C-125) (Bacillus halodurans), this protein is UPF0178 protein BH1374.